Reading from the N-terminus, the 247-residue chain is Sulfate transporter CysZ (247 aa).

5 consecutive transmembrane segments (helical) span residues Phe29–Phe49, Phe66–Phe86, Leu141–Leu160, Val164–Phe186, and Val212–Ile232.

Belongs to the CysZ family.

Its subcellular location is the cell inner membrane. In terms of biological role, high affinity, high specificity proton-dependent sulfate transporter, which mediates sulfate uptake. Provides the sulfur source for the cysteine synthesis pathway. This Vibrio parahaemolyticus serotype O3:K6 (strain RIMD 2210633) protein is Sulfate transporter CysZ.